Reading from the N-terminus, the 1785-residue chain is 1,3-beta-glucan synthase component FKS3 (1785 aa).

Helical transmembrane passes span 337-357 (FWII…PTLY), 375-395 (LSVI…ATVF), 415-435 (IGLL…LGFF), 444-464 (AYIV…FFAV), 508-528 (LWVF…TLSL), 547-567 (YLLG…LMLL), 572-592 (LFFL…SIVL), and 712-732 (LATP…TVLV). 2 stretches are compositionally biased toward basic and acidic residues: residues 791–801 (ESSHDEDRLEI) and 815–824 (DHTESRKLPT). The tract at residues 791–824 (ESSHDEDRLEIPDALYDPRSSPLSDHTESRKLPT) is disordered. 5 N-linked (GlcNAc...) asparagine glycosylation sites follow: Asn-844, Asn-874, Asn-955, Asn-1002, and Asn-1170. Transmembrane regions (helical) follow at residues 1215–1235 (LFIS…GALN), 1268–1288 (VSIF…PLLI), and 1303–1323 (FLHH…QVYS). N-linked (GlcNAc...) asparagine glycosylation occurs at Asn-1360. A run of 5 helical transmembrane segments spans residues 1370–1390 (FFML…WFWI), 1394–1414 (SMCF…DFFI), 1475–1495 (FAEL…FSFI), 1514–1534 (LLVT…LFWV), and 1549–1569 (AGAV…LLDF). N-linked (GlcNAc...) asparagine glycosylation occurs at Asn-1579. 3 helical membrane passes run 1585 to 1605 (ILLI…TTIF), 1655 to 1675 (FFLG…PFID), and 1713 to 1733 (FSLY…PFFA). Asn-1761 carries N-linked (GlcNAc...) asparagine glycosylation.

The protein belongs to the glycosyltransferase 48 family. N-glycosylated.

Its subcellular location is the mitochondrion. The protein localises to the membrane. It carries out the reaction [(1-&gt;3)-beta-D-glucosyl](n) + UDP-alpha-D-glucose = [(1-&gt;3)-beta-D-glucosyl](n+1) + UDP + H(+). Functionally, required for spore wall assembly. The chain is 1,3-beta-glucan synthase component FKS3 (FKS3) from Saccharomyces cerevisiae (strain ATCC 204508 / S288c) (Baker's yeast).